The sequence spans 380 residues: MTDVPIKYRLIKKEKHTGARLGEIITPHGTFPTPMFMPVGTQATVKTMSPEELKAMGSGIILSNTYHLWLRPGDELVARAGGLHKFMNWDQPILTDSGGFQVYSLADSRNISEEGVTFKNHLNGSKMFLSPEKAISIQNNLGSDIMMSFDECPQFYQPYDYVKKSIERTSRWAERGLKAHRRPHDQGLFGIVQGAGFEDLRRQSAHDLVSMDFPGYSIGGLAVGETHDEMNAVLDFTTPLLPENKPRYLMGVGAPDSLIDGVIRGVDMFDCVLPTRIARNGTCMTNRGRLVVKNAQFAEDFTPLDPECDCYTCKNYTRAYLRHLLKADETFGIRLTSYHNLYFLINLMKNVRQAIMDDNLLEFRQDFMEKYGYGKNGRNF.

Catalysis depends on Asp-96, which acts as the Proton acceptor. Substrate is bound by residues 96-100 (DSGGF), Asp-150, Gln-193, and Gly-220. The interval 251 to 257 (GVGAPDS) is RNA binding. The Nucleophile role is filled by Asp-270. The RNA binding; important for wobble base 34 recognition stretch occupies residues 275-279 (TRIAR). Residues Cys-308, Cys-310, Cys-313, and His-339 each coordinate Zn(2+).

It belongs to the queuine tRNA-ribosyltransferase family. In terms of assembly, homodimer. Within each dimer, one monomer is responsible for RNA recognition and catalysis, while the other monomer binds to the replacement base PreQ1. Zn(2+) serves as cofactor.

The catalysed reaction is 7-aminomethyl-7-carbaguanine + guanosine(34) in tRNA = 7-aminomethyl-7-carbaguanosine(34) in tRNA + guanine. It participates in tRNA modification; tRNA-queuosine biosynthesis. Its function is as follows. Catalyzes the base-exchange of a guanine (G) residue with the queuine precursor 7-aminomethyl-7-deazaguanine (PreQ1) at position 34 (anticodon wobble position) in tRNAs with GU(N) anticodons (tRNA-Asp, -Asn, -His and -Tyr). Catalysis occurs through a double-displacement mechanism. The nucleophile active site attacks the C1' of nucleotide 34 to detach the guanine base from the RNA, forming a covalent enzyme-RNA intermediate. The proton acceptor active site deprotonates the incoming PreQ1, allowing a nucleophilic attack on the C1' of the ribose to form the product. After dissociation, two additional enzymatic reactions on the tRNA convert PreQ1 to queuine (Q), resulting in the hypermodified nucleoside queuosine (7-(((4,5-cis-dihydroxy-2-cyclopenten-1-yl)amino)methyl)-7-deazaguanosine). The chain is Queuine tRNA-ribosyltransferase from Streptococcus suis (strain 98HAH33).